Reading from the N-terminus, the 203-residue chain is N-(5'-phosphoribosyl)anthranilate isomerase (203 aa).

This sequence belongs to the TrpF family.

It carries out the reaction N-(5-phospho-beta-D-ribosyl)anthranilate = 1-(2-carboxyphenylamino)-1-deoxy-D-ribulose 5-phosphate. Its pathway is amino-acid biosynthesis; L-tryptophan biosynthesis; L-tryptophan from chorismate: step 3/5. In Thermoanaerobacter pseudethanolicus (strain ATCC 33223 / 39E) (Clostridium thermohydrosulfuricum), this protein is N-(5'-phosphoribosyl)anthranilate isomerase.